The chain runs to 240 residues: Phosphoribosylaminoimidazole-succinocarboxamide synthase (240 aa).

The protein belongs to the SAICAR synthetase family.

It catalyses the reaction 5-amino-1-(5-phospho-D-ribosyl)imidazole-4-carboxylate + L-aspartate + ATP = (2S)-2-[5-amino-1-(5-phospho-beta-D-ribosyl)imidazole-4-carboxamido]succinate + ADP + phosphate + 2 H(+). The protein operates within purine metabolism; IMP biosynthesis via de novo pathway; 5-amino-1-(5-phospho-D-ribosyl)imidazole-4-carboxamide from 5-amino-1-(5-phospho-D-ribosyl)imidazole-4-carboxylate: step 1/2. This Wigglesworthia glossinidia brevipalpis protein is Phosphoribosylaminoimidazole-succinocarboxamide synthase.